An 84-amino-acid chain; its full sequence is Small ribosomal subunit protein eS27-like (84 aa).

A compositionally biased stretch (basic and acidic residues) spans 1–16; the sequence is MPLARDLLHPSLEEEK. Residues 1-23 are disordered; that stretch reads MPLARDLLHPSLEEEKKKHKKKR. The C4-type zinc-finger motif lies at 38 to 60; it reads PGCYKITTVFSHAQTVVLCVGCS.

The protein belongs to the eukaryotic ribosomal protein eS27 family. Zn(2+) is required as a cofactor.

The sequence is that of Small ribosomal subunit protein eS27-like from Mus musculus (Mouse).